A 97-amino-acid chain; its full sequence is Mapk-regulated corepressor-interacting protein 1 (97 aa).

A compositionally biased stretch (polar residues) spans 1–26; it reads MTSSSTPRMHTYKRTSSPRSPTNTGE. Disordered regions lie at residues 1 to 27 and 54 to 97; these read MTSS…TGEL and QNHE…SKKS. 2 stretches are compositionally biased toward basic and acidic residues: residues 54–68 and 84–97; these read QNHE…EYVE and SDLK…SKKS. The short motif at 80 to 84 is the PXDLS motif element; sequence PVDLS.

The protein belongs to the MCRIP family.

The protein resides in the nucleus. The protein localises to the cytoplasm. It is found in the stress granule. May play a role in the regulation of the epithelial-mesenchymal transition. The sequence is that of Mapk-regulated corepressor-interacting protein 1 (mcrip1) from Danio rerio (Zebrafish).